The following is a 368-amino-acid chain: DNA replication and repair protein RecF (368 aa).

30–37 (GNNAQGKT) is an ATP binding site.

Belongs to the RecF family.

The protein resides in the cytoplasm. In terms of biological role, the RecF protein is involved in DNA metabolism; it is required for DNA replication and normal SOS inducibility. RecF binds preferentially to single-stranded, linear DNA. It also seems to bind ATP. This Streptococcus pyogenes serotype M18 (strain MGAS8232) protein is DNA replication and repair protein RecF.